The following is a 262-amino-acid chain: Ribosome biogenesis GTPase A (262 aa).

The region spanning 12–157 (KRQIKDLLRL…ILDTPGILYK (146 aa)) is the CP-type G domain. GTP is bound by residues 54-57 (NKVD), 109-114 (NTGKST), and G153.

The protein belongs to the TRAFAC class YlqF/YawG GTPase family. MTG1 subfamily.

It localises to the cytoplasm. Its function is as follows. Required for a late step of 50S ribosomal subunit assembly. Has GTPase activity. Binds to the 23S rRNA. This Thermotoga maritima (strain ATCC 43589 / DSM 3109 / JCM 10099 / NBRC 100826 / MSB8) protein is Ribosome biogenesis GTPase A.